The chain runs to 389 residues: Calreticulin (389 aa).

The N-terminal stretch at Met-1–Ala-13 is a signal peptide. Residues Ser-12–Asp-189 are N-domain. Residues Thr-20, Asn-52, and Asn-53 each coordinate Ca(2+). A disulfide bridge connects residues Cys-96 and Cys-130. Tyr-100, Lys-102, Tyr-121, and Asp-128 together coordinate an alpha-D-glucoside. 7 tandem repeats follow at residues Lys-183–Met-194, Asp-202–Asp-213, Asp-219–Asp-230, Asp-237–Asp-248, Gly-252–Pro-262, Gly-266–Pro-276, and Gly-280–Pro-290. Residues Lys-183–Asp-248 form a 4 X approximate repeats region. A P-domain region spans residues Glu-190–Tyr-301. The span at Asp-213 to Pro-232 shows a compositional bias: basic and acidic residues. The disordered stretch occupies residues Asp-213–Ala-256. The 3 X approximate repeats stretch occupies residues Gly-252–Pro-290. The segment at Asp-302–Leu-389 is C-domain. Residue Asp-310 coordinates an alpha-D-glucoside. A Ca(2+)-binding site is contributed by Asp-321. A coiled-coil region spans residues Ile-329 to Glu-388. The tract at residues Lys-347–Leu-389 is disordered. Positions Lys-386–Leu-389 match the Prevents secretion from ER motif.

It belongs to the calreticulin family. In terms of assembly, interacts (via C-terminus) with host C1q.

The protein localises to the endoplasmic reticulum lumen. Its subcellular location is the cell projection. It localises to the uropodium. The protein resides in the cell surface. It is found in the phagocytic cup. Molecular calcium-binding chaperone promoting folding, oligomeric assembly and quality control in the ER via the calreticulin/calnexin cycle. This lectin may interact transiently with almost all of the monoglucosylated glycoproteins that are synthesized in the ER. Plays a role in host cell phagocytosis, possibly by acting as a receptor for host C1q. Binding to C1q prevents the activation of the host classical complement pathway. Also, binds to apoptotic host cells independently of host C1q and collectins. The polypeptide is Calreticulin (Entamoeba histolytica (strain ATCC 30459 / HM-1:IMSS / ABRM)).